A 196-amino-acid chain; its full sequence is Ribonuclease HII (196 aa).

Positions 9–196 constitute an RNase H type-2 domain; the sequence is KLVAGVDEVG…KPVRHALGIE (188 aa). A divalent metal cation is bound by residues Asp-15, Glu-16, and Asp-107.

The protein belongs to the RNase HII family. Mn(2+) is required as a cofactor. Requires Mg(2+) as cofactor.

The protein localises to the cytoplasm. The catalysed reaction is Endonucleolytic cleavage to 5'-phosphomonoester.. Its function is as follows. Endonuclease that specifically degrades the RNA of RNA-DNA hybrids. This chain is Ribonuclease HII, found in Aeromonas salmonicida (strain A449).